The sequence spans 89 residues: Small ribosomal subunit protein uS15 (89 aa).

The protein belongs to the universal ribosomal protein uS15 family. As to quaternary structure, part of the 30S ribosomal subunit. Forms a bridge to the 50S subunit in the 70S ribosome, contacting the 23S rRNA.

Functionally, one of the primary rRNA binding proteins, it binds directly to 16S rRNA where it helps nucleate assembly of the platform of the 30S subunit by binding and bridging several RNA helices of the 16S rRNA. In terms of biological role, forms an intersubunit bridge (bridge B4) with the 23S rRNA of the 50S subunit in the ribosome. The protein is Small ribosomal subunit protein uS15 of Nostoc sp. (strain PCC 7120 / SAG 25.82 / UTEX 2576).